Here is a 511-residue protein sequence, read N- to C-terminus: MSLKPTLLLILDGWGKAPAGPGNAVTLAGMPHLSSLLRQAGCTELACSGRAVGLPEGFMGNSEVGHMNIGAGRVVYQDMTRIDIAVERGELASNPALTGLFEAVRATGGRVHLMGLLSDGGVHSHIAHVEALALAARDAGVEVVVHAFLDGRDTAPTSGVGYVKRLASFLESNRAGRIGSLVGRYYAMDRDKRWDRNLLAWAMLTRGEGAPADDPVGAVEAAYAAGETDEFVKPRVVVEGGSPIGTIRDGDGVFFFNFRADRARQLSHMFVDGTFEHGDRGHVPSLAGFATMTSYDPALGLPVAFDKQPLDGTLGEVVANQGLRQLRIAETEKYAHVTYFLNCGREEPFPGEERRLLPSPRDVATYDLKPEMSAEAVTDTLLEEWAGGGYTLAVCNVANLDMVGHTGVIPAAVRACETVDACVRRIADAVLASGGRLVITADHGNAEELLDESGNPQTAHSMNRVPFTVVEQGRVHTFREGGVLGDIAPTILGLWGVPASAGMTGTSLITE.

Mn(2+) contacts are provided by aspartate 12 and serine 62. Serine 62 (phosphoserine intermediate) is an active-site residue. Residues histidine 123, 152–153 (RD), arginine 184, arginine 190, 259–262 (RADR), and lysine 333 each bind substrate. Positions 401, 405, 442, 443, and 460 each coordinate Mn(2+).

The protein belongs to the BPG-independent phosphoglycerate mutase family. As to quaternary structure, monomer. Mn(2+) serves as cofactor.

The enzyme catalyses (2R)-2-phosphoglycerate = (2R)-3-phosphoglycerate. It participates in carbohydrate degradation; glycolysis; pyruvate from D-glyceraldehyde 3-phosphate: step 3/5. Functionally, catalyzes the interconversion of 2-phosphoglycerate and 3-phosphoglycerate. This chain is 2,3-bisphosphoglycerate-independent phosphoglycerate mutase, found in Nitratidesulfovibrio vulgaris (strain ATCC 29579 / DSM 644 / CCUG 34227 / NCIMB 8303 / VKM B-1760 / Hildenborough) (Desulfovibrio vulgaris).